The following is a 1441-amino-acid chain: Gag-Pol polyprotein (1441 aa).

Gly2 carries N-myristoyl glycine; by host lipidation. The segment at 7-31 (VLSGGELDRWENIRLRPGGKKKYKL) is interaction with Gp41. The interval 8–43 (LSGGELDRWENIRLRPGGKKKYKLKHVVWASRELER) is interaction with host CALM1. Residues 12–19 (ELDRWENI) are interaction with host AP3D1. Residues 14 to 33 (DRWENIRLRPGGKKKYKLKH) form an interaction with membrane phosphatidylinositol 4,5-bisphosphate and RNA region. Residues 16-22 (WENIRLR) carry the Nuclear export signal motif. Residues 26-32 (KKKYKLK) carry the Nuclear localization signal motif. Residues 73-77 (EELKS) are interaction with membrane phosphatidylinositol 4,5-bisphosphate. Positions 106-131 (EEQNKSKKKAQQAAADTGNRGNSSQV) are disordered. Tyr135 is modified (phosphotyrosine; by host). Residues 192–230 (NTVGGHQAAMQMLKETINEEAAEWDRLHPVHAGPITPGQ) form an interaction with human PPIA/CYPA and NUP153 region. The tract at residues 280–366 (YSPSSILDIR…GGPGHKARVL (87 aa)) is dimerization/Multimerization of capsid protein p24. 2 consecutive CCHC-type zinc fingers follow at residues 393 to 410 (IKCF…NCRA) and 414 to 431 (RGCW…DCTE). Positions 451–460 (SSEQNRANSP) are enriched in polar residues. Residues 451–489 (SSEQNRANSPTRRELQVWGRDNNSLSEAGEEAGDDRQGP) are disordered. Residues 495–499 (PQITL) form a dimerization of protease region. A Peptidase A2 domain is found at 514 to 583 (KEALLDTGAD…TPVNIIGRNL (70 aa)). Asp519 serves as the catalytic For protease activity; shared with dimeric partner. 2 dimerization of protease regions span residues 543 to 549 (GIGGFIK) and 582 to 594 (NLLT…LNFP). Residues 637–827 (EGKISKIGPE…PPFLWMGYEL (191 aa)) form the Reverse transcriptase domain. Mg(2+)-binding residues include Asp703, Asp778, and Asp779. An RT 'primer grip' region spans residues 820–828 (FLWMGYELH). The short motif at 991-1007 (WETWWTEYTXATWIPEW) is the Tryptophan repeat motif element. The RNase H type-1 domain maps to 1027–1150 (IVGAETFYVD…VDKLVSAGIR (124 aa)). Residues Asp1036, Glu1071, Asp1091, and Asp1142 each coordinate Mg(2+). The segment at 1156–1197 (DGIDKAQEDHEKYHSNWRAMASDFNLPPIVAKEIVASCDKCQ) adopts an Integrase-type zinc-finger fold. Residues His1165, His1169, Cys1193, and Cys1196 each coordinate Zn(2+). Positions 1207-1357 (VDCSPGIWQL…SAGERIVGII (151 aa)) constitute an Integrase catalytic domain. Mg(2+) is bound by residues Asp1217, Asp1269, and Glu1305. The segment at residues 1376 to 1423 (FRVYYRDSRDPLWKGPAKLLWKGEGAVVIQDNNDIKVVPRRKAKVIRD) is a DNA-binding region (integrase-type).

As to quaternary structure, homotrimer; further assembles as hexamers of trimers. Interacts with gp41 (via C-terminus). Interacts with host CALM1; this interaction induces a conformational change in the Matrix protein, triggering exposure of the myristate group. Interacts with host AP3D1; this interaction allows the polyprotein trafficking to multivesicular bodies during virus assembly. Part of the pre-integration complex (PIC) which is composed of viral genome, matrix protein, Vpr and integrase. In terms of assembly, homodimer; the homodimer further multimerizes as homohexamers or homopentamers. Interacts with human PPIA/CYPA; This interaction stabilizes the capsid. Interacts with human NUP153. Interacts with host PDZD8; this interaction stabilizes the capsid. Interacts with monkey TRIM5; this interaction destabilizes the capsid. Homodimer, whose active site consists of two apposed aspartic acid residues. As to quaternary structure, heterodimer of p66 RT and p51 RT (RT p66/p51). Heterodimerization of RT is essential for DNA polymerase activity. The overall folding of the subdomains is similar in p66 RT and p51 RT but the spatial arrangements of the subdomains are dramatically different. In terms of assembly, homotetramer; may further associate as a homohexadecamer. Part of the pre-integration complex (PIC) which is composed of viral genome, matrix protein, Vpr and integrase. Interacts with human SMARCB1/INI1 and human PSIP1/LEDGF isoform 1. Interacts with human KPNA3; this interaction might play a role in nuclear import of the pre-integration complex. Interacts with human NUP153; this interaction might play a role in nuclear import of the pre-integration complex. The cofactor is Mg(2+). Specific enzymatic cleavages by the viral protease yield mature proteins. The protease is released by autocatalytic cleavage. The polyprotein is cleaved during and after budding, this process is termed maturation. Proteolytic cleavage of p66 RT removes the RNase H domain to yield the p51 RT subunit. Nucleocapsid protein p7 might be further cleaved after virus entry. In terms of processing, tyrosine phosphorylated presumably in the virion by a host kinase. Phosphorylation is apparently not a major regulator of membrane association. Post-translationally, phosphorylated possibly by host MAPK1; this phosphorylation is necessary for Pin1-mediated virion uncoating. Methylated by host PRMT6, impairing its function by reducing RNA annealing and the initiation of reverse transcription.

It is found in the host cell membrane. It localises to the host endosome. Its subcellular location is the host multivesicular body. The protein resides in the virion membrane. The protein localises to the host nucleus. It is found in the host cytoplasm. It localises to the virion. The enzyme catalyses Specific for a P1 residue that is hydrophobic, and P1' variable, but often Pro.. It carries out the reaction Endohydrolysis of RNA in RNA/DNA hybrids. Three different cleavage modes: 1. sequence-specific internal cleavage of RNA. Human immunodeficiency virus type 1 and Moloney murine leukemia virus enzymes prefer to cleave the RNA strand one nucleotide away from the RNA-DNA junction. 2. RNA 5'-end directed cleavage 13-19 nucleotides from the RNA end. 3. DNA 3'-end directed cleavage 15-20 nucleotides away from the primer terminus.. The catalysed reaction is 3'-end directed exonucleolytic cleavage of viral RNA-DNA hybrid.. It catalyses the reaction DNA(n) + a 2'-deoxyribonucleoside 5'-triphosphate = DNA(n+1) + diphosphate. Its activity is regulated as follows. Protease: The viral protease is inhibited by many synthetic protease inhibitors (PIs), such as amprenavir, atazanavir, indinavir, loprinavir, nelfinavir, ritonavir and saquinavir. Use of protease inhibitors in tritherapy regimens permit more ambitious therapeutic strategies. Reverse transcriptase/ribonuclease H: RT can be inhibited either by nucleoside RT inhibitors (NRTIs) or by non nucleoside RT inhibitors (NNRTIs). NRTIs act as chain terminators, whereas NNRTIs inhibit DNA polymerization by binding a small hydrophobic pocket near the RT active site and inducing an allosteric change in this region. Classical NRTIs are abacavir, adefovir (PMEA), didanosine (ddI), lamivudine (3TC), stavudine (d4T), tenofovir (PMPA), zalcitabine (ddC), and zidovudine (AZT). Classical NNRTIs are atevirdine (BHAP U-87201E), delavirdine, efavirenz (DMP-266), emivirine (I-EBU), and nevirapine (BI-RG-587). The tritherapies used as a basic effective treatment of AIDS associate two NRTIs and one NNRTI. Mediates, with Gag polyprotein, the essential events in virion assembly, including binding the plasma membrane, making the protein-protein interactions necessary to create spherical particles, recruiting the viral Env proteins, and packaging the genomic RNA via direct interactions with the RNA packaging sequence (Psi). Gag-Pol polyprotein may regulate its own translation, by the binding genomic RNA in the 5'-UTR. At low concentration, the polyprotein would promote translation, whereas at high concentration, the polyprotein would encapsidate genomic RNA and then shut off translation. Its function is as follows. Targets the polyprotein to the plasma membrane via a multipartite membrane-binding signal, that includes its myristoylated N-terminus. Matrix protein is part of the pre-integration complex. Implicated in the release from host cell mediated by Vpu. Binds to RNA. In terms of biological role, forms the conical core that encapsulates the genomic RNA-nucleocapsid complex in the virion. Most core are conical, with only 7% tubular. The core is constituted by capsid protein hexamer subunits. The core is disassembled soon after virion entry. Host restriction factors such as TRIM5-alpha or TRIMCyp bind retroviral capsids and cause premature capsid disassembly, leading to blocks in reverse transcription. Capsid restriction by TRIM5 is one of the factors which restricts HIV-1 to the human species. Host PIN1 apparently facilitates the virion uncoating. On the other hand, interactions with PDZD8 or CYPA stabilize the capsid. Functionally, encapsulates and protects viral dimeric unspliced genomic RNA (gRNA). Binds these RNAs through its zinc fingers. Acts as a nucleic acid chaperone which is involved in rearangement of nucleic acid secondary structure during gRNA retrotranscription. Also facilitates template switch leading to recombination. As part of the polyprotein, participates in gRNA dimerization, packaging, tRNA incorporation and virion assembly. Aspartyl protease that mediates proteolytic cleavages of Gag and Gag-Pol polyproteins during or shortly after the release of the virion from the plasma membrane. Cleavages take place as an ordered, step-wise cascade to yield mature proteins. This process is called maturation. Displays maximal activity during the budding process just prior to particle release from the cell. Also cleaves Nef and Vif, probably concomitantly with viral structural proteins on maturation of virus particles. Hydrolyzes host EIF4GI and PABP1 in order to shut off the capped cellular mRNA translation. The resulting inhibition of cellular protein synthesis serves to ensure maximal viral gene expression and to evade host immune response. Also mediates cleavage of host YTHDF3. Mediates cleavage of host CARD8, thereby activating the CARD8 inflammasome, leading to the clearance of latent HIV-1 in patient CD4(+) T-cells after viral reactivation; in contrast, HIV-1 can evade CARD8-sensing when its protease remains inactive in infected cells prior to viral budding. Its function is as follows. Multifunctional enzyme that converts the viral RNA genome into dsDNA in the cytoplasm, shortly after virus entry into the cell. This enzyme displays a DNA polymerase activity that can copy either DNA or RNA templates, and a ribonuclease H (RNase H) activity that cleaves the RNA strand of RNA-DNA heteroduplexes in a partially processive 3' to 5' endonucleasic mode. Conversion of viral genomic RNA into dsDNA requires many steps. A tRNA(3)-Lys binds to the primer-binding site (PBS) situated at the 5'-end of the viral RNA. RT uses the 3' end of the tRNA primer to perform a short round of RNA-dependent minus-strand DNA synthesis. The reading proceeds through the U5 region and ends after the repeated (R) region which is present at both ends of viral RNA. The portion of the RNA-DNA heteroduplex is digested by the RNase H, resulting in a ssDNA product attached to the tRNA primer. This ssDNA/tRNA hybridizes with the identical R region situated at the 3' end of viral RNA. This template exchange, known as minus-strand DNA strong stop transfer, can be either intra- or intermolecular. RT uses the 3' end of this newly synthesized short ssDNA to perform the RNA-dependent minus-strand DNA synthesis of the whole template. RNase H digests the RNA template except for two polypurine tracts (PPTs) situated at the 5'-end and near the center of the genome. It is not clear if both polymerase and RNase H activities are simultaneous. RNase H probably can proceed both in a polymerase-dependent (RNA cut into small fragments by the same RT performing DNA synthesis) and a polymerase-independent mode (cleavage of remaining RNA fragments by free RTs). Secondly, RT performs DNA-directed plus-strand DNA synthesis using the PPTs that have not been removed by RNase H as primers. PPTs and tRNA primers are then removed by RNase H. The 3' and 5' ssDNA PBS regions hybridize to form a circular dsDNA intermediate. Strand displacement synthesis by RT to the PBS and PPT ends produces a blunt ended, linear dsDNA copy of the viral genome that includes long terminal repeats (LTRs) at both ends. In terms of biological role, catalyzes viral DNA integration into the host chromosome, by performing a series of DNA cutting and joining reactions. This enzyme activity takes place after virion entry into a cell and reverse transcription of the RNA genome in dsDNA. The first step in the integration process is 3' processing. This step requires a complex comprising the viral genome, matrix protein, Vpr and integrase. This complex is called the pre-integration complex (PIC). The integrase protein removes 2 nucleotides from each 3' end of the viral DNA, leaving recessed CA OH's at the 3' ends. In the second step, the PIC enters cell nucleus. This process is mediated through integrase and Vpr proteins, and allows the virus to infect a non dividing cell. This ability to enter the nucleus is specific of lentiviruses, other retroviruses cannot and rely on cell division to access cell chromosomes. In the third step, termed strand transfer, the integrase protein joins the previously processed 3' ends to the 5' ends of strands of target cellular DNA at the site of integration. The 5'-ends are produced by integrase-catalyzed staggered cuts, 5 bp apart. A Y-shaped, gapped, recombination intermediate results, with the 5'-ends of the viral DNA strands and the 3' ends of target DNA strands remaining unjoined, flanking a gap of 5 bp. The last step is viral DNA integration into host chromosome. This involves host DNA repair synthesis in which the 5 bp gaps between the unjoined strands are filled in and then ligated. Since this process occurs at both cuts flanking the HIV genome, a 5 bp duplication of host DNA is produced at the ends of HIV-1 integration. Alternatively, Integrase may catalyze the excision of viral DNA just after strand transfer, this is termed disintegration. The polypeptide is Gag-Pol polyprotein (gag-pol) (Human immunodeficiency virus type 1 group M subtype B (isolate MN) (HIV-1)).